The following is a 506-amino-acid chain: Apolipoprotein N-acyltransferase (506 aa).

A run of 6 helical transmembrane segments spans residues 26-46, 66-86, 89-109, 113-133, 166-186, and 192-212; these read FAPY…LILI, FASG…MPLA, LFLM…FTWS, FFAK…WLIA, GVEL…YAVI, and MLLI…WDWV. Positions 225–471 constitute a CN hydrolase domain; it reads IQGNVDQNLK…TAVLRAELTP (247 aa). The Proton acceptor role is filled by glutamate 264. The active site involves lysine 330. The active-site Nucleophile is the cysteine 382. The chain crosses the membrane as a helical span at residues 479–499; it reads HQLGSWPLYIWVALSLALAWW.

The protein belongs to the CN hydrolase family. Apolipoprotein N-acyltransferase subfamily.

The protein resides in the cell inner membrane. It carries out the reaction N-terminal S-1,2-diacyl-sn-glyceryl-L-cysteinyl-[lipoprotein] + a glycerophospholipid = N-acyl-S-1,2-diacyl-sn-glyceryl-L-cysteinyl-[lipoprotein] + a 2-acyl-sn-glycero-3-phospholipid + H(+). Its pathway is protein modification; lipoprotein biosynthesis (N-acyl transfer). Its function is as follows. Catalyzes the phospholipid dependent N-acylation of the N-terminal cysteine of apolipoprotein, the last step in lipoprotein maturation. In Vibrio vulnificus (strain CMCP6), this protein is Apolipoprotein N-acyltransferase.